Consider the following 122-residue polypeptide: Large ribosomal subunit protein uL14 (122 aa).

It belongs to the universal ribosomal protein uL14 family. As to quaternary structure, part of the 50S ribosomal subunit. Forms a cluster with proteins L3 and L19. In the 70S ribosome, L14 and L19 interact and together make contacts with the 16S rRNA in bridges B5 and B8.

Functionally, binds to 23S rRNA. Forms part of two intersubunit bridges in the 70S ribosome. The chain is Large ribosomal subunit protein uL14 from Gemmatimonas aurantiaca (strain DSM 14586 / JCM 11422 / NBRC 100505 / T-27).